We begin with the raw amino-acid sequence, 317 residues long: Transaldolase (317 aa).

Lysine 132 (schiff-base intermediate with substrate) is an active-site residue.

Belongs to the transaldolase family. Type 1 subfamily. In terms of assembly, homodimer.

Its subcellular location is the cytoplasm. It catalyses the reaction D-sedoheptulose 7-phosphate + D-glyceraldehyde 3-phosphate = D-erythrose 4-phosphate + beta-D-fructose 6-phosphate. Its pathway is carbohydrate degradation; pentose phosphate pathway; D-glyceraldehyde 3-phosphate and beta-D-fructose 6-phosphate from D-ribose 5-phosphate and D-xylulose 5-phosphate (non-oxidative stage): step 2/3. Its function is as follows. Transaldolase is important for the balance of metabolites in the pentose-phosphate pathway. This Haemophilus influenzae (strain PittEE) protein is Transaldolase.